The sequence spans 172 residues: Protein LOL2 (172 aa).

3 putative zinc finger regions span residues 4–34 (QIVCHGCRNILLYPRGAPSVCCAVCHAVSST), 44–74 (HLICGGCRTLLMYTRNATSVRCSCCDTVNLV), and 82–112 (HLNCGQCQTVLMYPYGAPSVKCAICNFITNT).

Its subcellular location is the nucleus. Putative zinc finger that may be involved in programmed cell death and defense response. This Oryza sativa subsp. japonica (Rice) protein is Protein LOL2 (LOL2).